The primary structure comprises 180 residues: Translation initiation factor IF-3 (180 aa).

The protein belongs to the IF-3 family. In terms of assembly, monomer.

Its subcellular location is the cytoplasm. In terms of biological role, IF-3 binds to the 30S ribosomal subunit and shifts the equilibrium between 70S ribosomes and their 50S and 30S subunits in favor of the free subunits, thus enhancing the availability of 30S subunits on which protein synthesis initiation begins. The chain is Translation initiation factor IF-3 from Shewanella oneidensis (strain ATCC 700550 / JCM 31522 / CIP 106686 / LMG 19005 / NCIMB 14063 / MR-1).